Consider the following 133-residue polypeptide: Holo-[acyl-carrier-protein] synthase (133 aa).

Residues aspartate 8 and glutamate 57 each coordinate Mg(2+).

The protein belongs to the P-Pant transferase superfamily. AcpS family. Mg(2+) is required as a cofactor.

It is found in the cytoplasm. It carries out the reaction apo-[ACP] + CoA = holo-[ACP] + adenosine 3',5'-bisphosphate + H(+). Transfers the 4'-phosphopantetheine moiety from coenzyme A to a Ser of acyl-carrier-protein. This Caulobacter vibrioides (strain ATCC 19089 / CIP 103742 / CB 15) (Caulobacter crescentus) protein is Holo-[acyl-carrier-protein] synthase.